Consider the following 337-residue polypeptide: Hsp90 co-chaperone Cdc37-like 1 (337 aa).

Pro residues predominate over residues 1–11 (MEQPWPPPGPW). Positions 1–43 (MEQPWPPPGPWSLPRAEGEAEEESDLDLSPGSPRCPQLPGGGT) are disordered. The interval 2–171 (EQPWPPPGPW…HEQKIRHFGM (170 aa)) is self-association. A phosphoserine mark is found at S32 and S88. Residues 84–122 (HNSESLDQEHAKAQTAISELRQREEEWRQKEEALVQRER) adopt a coiled-coil conformation. The interval 147 to 277 (KETEDEDKSK…SRVRLYSQSP (131 aa)) is self-association and interaction with Hsp90. The segment at 267 to 337 (KSRVRLYSQS…DDEPKMMDTV (71 aa)) is interaction with Hsp70. Residues 278-337 (NFQPVTVQNHVPHSGVGSIGLLESLPQNPDYLQYSINTALCSLNSVVHKEDDEPKMMDTV) form a required for interaction with STIP1 region.

This sequence belongs to the CDC37 family. In terms of assembly, self-associates. Forms complexes with Hsp70 and Hsp90. Interacts with CDC37, FKBP4, PPID and STIP1.

It is found in the cytoplasm. In terms of biological role, co-chaperone that binds to numerous proteins and promotes their interaction with Hsp70 and Hsp90. The polypeptide is Hsp90 co-chaperone Cdc37-like 1 (CDC37L1) (Bos taurus (Bovine)).